The following is an 853-amino-acid chain: Rod cGMP-specific 3',5'-cyclic phosphodiesterase subunit beta (853 aa).

Position 2 is an N-acetylserine (serine 2). GAF domains lie at 71–220 and 252–429; these read NMER…TLNL and DIER…GWSV. The region spanning 481-814 is the PDEase domain; sequence EEDELGKILK…KEWKALADEY (334 aa). Catalysis depends on histidine 557, which acts as the Proton donor. A divalent metal cation contacts are provided by histidine 561, histidine 597, aspartate 598, and aspartate 718. Residue cysteine 850 is modified to Cysteine methyl ester. Residue cysteine 850 is the site of S-geranylgeranyl cysteine attachment. Residues 851–853 constitute a propeptide, removed in mature form; sequence RIL.

The protein belongs to the cyclic nucleotide phosphodiesterase family. As to quaternary structure, oligomer composed of two catalytic chains (alpha and beta), an inhibitory chain (gamma) and the delta chain. A divalent metal cation is required as a cofactor.

The protein resides in the membrane. It is found in the cell projection. It localises to the cilium. The protein localises to the photoreceptor outer segment. It catalyses the reaction 3',5'-cyclic GMP + H2O = GMP + H(+). Its function is as follows. Necessary for the formation of a functional phosphodiesterase holoenzyme. Involved in retinal circadian rhythm photoentrainment via modulation of UVA and orange light-induced phase-shift of the retina clock. May participate in processes of transmission and amplification of the visual signal. In terms of biological role, rod-specific cGMP phosphodiesterase that catalyzes the hydrolysis of 3',5'-cyclic GMP. Necessary for the formation of a functional phosphodiesterase holoenzyme. Involved in retinal circadian rhythm photoentrainment via modulation of UVA and orange light-induced phase-shift of the retina clock. May participate in processes of transmission and amplification of the visual signal. This chain is Rod cGMP-specific 3',5'-cyclic phosphodiesterase subunit beta (PDE6B), found in Bos taurus (Bovine).